A 221-amino-acid chain; its full sequence is PKHD-type hydroxylase P9211_12561 (221 aa).

A Fe2OG dioxygenase domain is found at 80–174 (KVHGTMFTRS…RIVCVGWIQS (95 aa)). His-98, Asp-100, and His-155 together coordinate Fe cation. 2-oxoglutarate is bound at residue Arg-165.

The cofactor is Fe(2+). L-ascorbate serves as cofactor.

The sequence is that of PKHD-type hydroxylase P9211_12561 from Prochlorococcus marinus (strain MIT 9211).